The primary structure comprises 635 residues: Frizzled and smoothened-like protein C (635 aa).

The signal sequence occupies residues 1 to 20 (MKFKLIIFIIIIYIIKILKS). Residues 21–244 (EILNEFGYGL…NKWVQMYKMS (224 aa)) are Extracellular-facing. The region spanning 32-166 (DENLKCLSFI…LTKYGYTENN (135 aa)) is the FZ domain. 2 cysteine pairs are disulfide-bonded: cysteine 37–cysteine 108 and cysteine 50–cysteine 101. N-linked (GlcNAc...) asparagine glycans are attached at residues asparagine 65, asparagine 141, asparagine 156, asparagine 185, and asparagine 203. A helical transmembrane segment spans residues 245–265 (IVLSTLSFICSIYNIITFGLL). Residues 266–275 (SKLKSKYNLC) are Cytoplasmic-facing. The helical transmembrane segment at 276-296 (ITFFSVSTVLMSLMDIVTYGI) threads the bilayer. The Extracellular portion of the chain corresponds to 297–314 (GYEELLCPESGRYAIQSD). Residues 315–335 (VACGVTGAFFHIGITTGVLWW) form a helical membrane-spanning segment. Topologically, residues 336-356 (TTMSICLYSEVKRFKMISFRY) are cytoplasmic. The helical transmembrane segment at 357 to 377 (IIIFNSVISLILLIIPLSGQA) threads the bilayer. The Extracellular segment spans residues 378-398 (FMSGNGSLGCWIRKTWYANGT). Residues asparagine 382 and asparagine 396 are each glycosylated (N-linked (GlcNAc...) asparagine). A helical transmembrane segment spans residues 399 to 419 (FWIPCGISLFIGAICIVLVIY). At 420–440 (EIFKISRNLSKDNKPLMFQIR) the chain is on the cytoplasmic side. Residues 441–461 (PFLCVLLVGGSFLYLFIFYFN) traverse the membrane as a helical segment. Residues 462-496 (NERNLDKYKAAIPSYVQCLLSSDENGEDCLTDGPG) are Extracellular-facing. The chain crosses the membrane as a helical span at residues 497–517 (FGAYFTFYFFTRLFGITSFSI). The Cytoplasmic portion of the chain corresponds to 518 to 635 (YGTSKIARDI…SSKDSNTNSF (118 aa)). The segment covering 559–594 (SISGSNQKRFNRNGSNFNMKQNKSNPNDSISLSVVE) has biased composition (polar residues). The interval 559 to 635 (SISGSNQKRF…SSKDSNTNSF (77 aa)) is disordered. Positions 594–623 (ESTKKQDTENELESNIETKENRSTDISIEN) form a coiled coil. A compositionally biased stretch (low complexity) spans 623-635 (NTTSSKDSNTNSF).

The protein belongs to the G-protein coupled receptor Fz/Smo family.

The protein resides in the membrane. The protein is Frizzled and smoothened-like protein C (fslC) of Dictyostelium discoideum (Social amoeba).